The chain runs to 379 residues: Muconate cycloisomerase 1-1 (379 aa).

K169 is a catalytic residue. 3 residues coordinate Mn(2+): D198, E224, and D247.

The protein belongs to the mandelate racemase/muconate lactonizing enzyme family. In terms of assembly, homooctamer. Mn(2+) serves as cofactor.

It catalyses the reaction (S)-muconolactone = cis,cis-muconate + H(+). Its pathway is aromatic compound metabolism; beta-ketoadipate pathway; 5-oxo-4,5-dihydro-2-furylacetate from catechol: step 2/3. In terms of biological role, catalyzes a syn cycloisomerization. In Acinetobacter lwoffii, this protein is Muconate cycloisomerase 1-1 (catB1).